A 221-amino-acid chain; its full sequence is Ribosomal RNA small subunit methyltransferase G (221 aa).

Residues Gly85, Phe90, 136–137 (AE), and Arg149 each bind S-adenosyl-L-methionine.

The protein belongs to the methyltransferase superfamily. RNA methyltransferase RsmG family.

It localises to the cytoplasm. Functionally, specifically methylates the N7 position of a guanine in 16S rRNA. The protein is Ribosomal RNA small subunit methyltransferase G of Porphyromonas gingivalis (strain ATCC BAA-308 / W83).